We begin with the raw amino-acid sequence, 439 residues long: Phthalate 4,5-dioxygenase oxygenase subunit (439 aa).

In terms of domain architecture, Rieske spans 27–134 (WTPVCLLEEV…TREWGGFVWA (108 aa)). [2Fe-2S] cluster-binding residues include C70, H72, C89, and H92. Residues H181 and H186 each coordinate Fe cation.

It belongs to the bacterial ring-hydroxylating dioxygenase alpha subunit family. As to quaternary structure, this dioxygenase system consists of two proteins: phthalate oxygenase and phthalate oxygenase reductase. Requires [2Fe-2S] cluster as cofactor. Fe cation is required as a cofactor.

It catalyses the reaction phthalate + NADH + O2 + H(+) = cis-4,5-dihydroxycyclohexa-2,6-diene-1,2-dicarboxylate + NAD(+). Its pathway is xenobiotic degradation; phthalate degradation; 3,4-dihydroxybenzoate from phthalate: step 1/3. In Pseudomonas putida (Arthrobacter siderocapsulatus), this protein is Phthalate 4,5-dioxygenase oxygenase subunit (pht3).